The sequence spans 246 residues: MELNSVILTTGSSVGFFKLVNYGLGKLPIPETARRNAWKWNNISTSFVHSLITGVWSVLCFCMHPQMAEDLIETHSVFSHALVSVSIGYFIYDFLDMVINQKIIHSWELLFHHVVVITCFGISVLTCRYVGFAVVALLVEINSVFLHLRQVLRMANLAKSTFYRVNSMINLGTYVVFRINTLAWMTRWLVLNRDLIPLFSYTIGSVGLAIMTAMNIVLFYRLMRSDFMKASREKELRKEKEKEKDM.

6 helical membrane-spanning segments follow: residues 5–25, 43–63, 79–99, 107–127, 128–148, and 199–219; these read SVIL…YGLG, ISTS…CFCM, SHAL…DMVI, WELL…VLTC, RYVG…FLHL, and FSYT…IVLF. The region spanning 35–231 is the TLC domain; the sequence is RNAWKWNNIS…LMRSDFMKAS (197 aa).

The protein belongs to the TLCD family.

The protein localises to the cell membrane. Its function is as follows. Regulates the composition and fluidity of the plasma membrane. Inhibits the incorporation of membrane-fluidizing phospholipids containing omega-3 long-chain polyunsaturated fatty acids (LCPUFA) and thereby promotes membrane rigidity. Does not appear to have any effect on LCPUFA synthesis. This Danio rerio (Zebrafish) protein is TLC domain-containing protein 2 (tlcd2).